Consider the following 347-residue polypeptide: Mitochondrial glycine transporter (347 aa).

Solcar repeat units lie at residues 18–102 (SKPT…LRTA), 138–222 (LSHT…SKRS), and 247–331 (STAS…LIMW). A run of 6 helical transmembrane segments spans residues 24–49 (FAAG…TRVQ), 77–103 (GTLP…RTAV), 144–169 (LITG…VRYE), 197–220 (GFGA…EQSK), 251–277 (INFI…KTRV), and 306–324 (GLGL…AWTV).

It belongs to the mitochondrial carrier (TC 2.A.29) family. SLC25A38 subfamily.

It localises to the mitochondrion inner membrane. The enzyme catalyses glycine(in) = glycine(out). Functionally, mitochondrial glycine transporter that imports glycine into the mitochondrial matrix. Plays an important role in providing glycine for the first enzymatic step in heme biosynthesis, the condensation of glycine with succinyl-CoA to produce 5-aminolevulinate (ALA) in the mitochondrial matrix. The sequence is that of Mitochondrial glycine transporter from Coccidioides immitis (strain RS) (Valley fever fungus).